The primary structure comprises 393 residues: Prokineticin receptor 1 (393 aa).

At 1 to 62 (METTVGALGE…TNSRTFFAAK (62 aa)) the chain is on the extracellular side. Asparagine 11 carries N-linked (GlcNAc...) asparagine glycosylation. Residues 63–83 (IVIGMALVGIMLVCGIGNFIF) traverse the membrane as a helical segment. Over 84-98 (ITALARYKKLRNLTN) the chain is Cytoplasmic. A helical transmembrane segment spans residues 99–119 (LLIANLAISDFLVAIVCCPFE). Over 120–146 (MDYYVVRQLSWEHGHVLCASVNYLRTV) the chain is Extracellular. Cysteine 137 and cysteine 217 form a disulfide bridge. Residues 147–167 (SLYVSTNALLAIAIDRYLAIV) traverse the membrane as a helical segment. Topologically, residues 168 to 179 (HPLRPRMKCQTA) are cytoplasmic. A helical membrane pass occupies residues 180–200 (AGLIFLVWSVSILIAIPAAYF). Residues 201-232 (TTETVLVIVERQEKIFCGQIWPVDQQFYYRSY) are Extracellular-facing. Residues 233–253 (FLLVFGLEFVGPVVAMTLCYA) form a helical membrane-spanning segment. The Cytoplasmic segment spans residues 254–282 (RVSRELWFKAVPGFQTEQIRRRLRCRRRT). Residues 283–303 (VLGLVCVLSAYVLCWAPFYGF) traverse the membrane as a helical segment. The Extracellular portion of the chain corresponds to 304 to 322 (TIVRDFFPSVFVKEKHYLT). Residues 323-343 (AFYVVECIAMSNSMINTLCFV) form a helical membrane-spanning segment. At 344–393 (TVRNNTSKYLKRILRLQWRASPSGSKASADLDLRTTGIPATEEVDCIRLK) the chain is on the cytoplasmic side.

It belongs to the G-protein coupled receptor 1 family. As to expression, expressed at high levels in the heart, skeletal muscle and pancreas. Expressed at lower levels in the brain, lung, liver and kidney.

Its subcellular location is the cell membrane. Functionally, receptor for prokineticin 1. Exclusively coupled to the G(q) subclass of heteromeric G proteins. Activation leads to mobilization of calcium, stimulation of phosphoinositide turnover and activation of p44/p42 mitogen-activated protein kinase. May play a role during early pregnancy. The sequence is that of Prokineticin receptor 1 (Prokr1) from Mus musculus (Mouse).